Reading from the N-terminus, the 500-residue chain is Matrilin-1 (500 aa).

The signal sequence occupies residues 1 to 29 (MKVTSGPAFALCSLLLLLLLLLQVPDSLS). The VWFA 1 domain maps to 30–226 (LVPQPRGHLC…AKKFQEAFCV (197 aa)). N-linked (GlcNAc...) asparagine glycosylation is present at N80. The EGF-like domain maps to 227–267 (VSDLCATGDHDCEQLCVSSPGSYTCACHEGFTLNSDGKTCN). Intrachain disulfides connect C231–C242, C238–C251, and C253–C266. The VWFA 2 domain maps to 268–457 (VCRGGGSGSA…GKKLQKQICV (190 aa)). N348 carries N-linked (GlcNAc...) asparagine glycosylation. Residues 471-499 (EAKVEGLLQALTRKLEAVSGRLAVLENRI) adopt a coiled-coil conformation.

Homotrimer. Part of a complex composed of MATN1 (via VWFA1 domain), type 2 collagens and type 6 collagens. Forms a complex (via covalent bonds) with ACAN; the interaction increases in abundance with increasing age of the organism via an increase in occupancy of MATN1 binding sites. Interacts with COMP. N-glycosylated; reduces binding affinity for type 2 collagens. Expressed in femoral head articular cartilage. Expressed in the trachea and extraskeletal tissue around the eye.

It is found in the secreted. It localises to the extracellular space. Its subcellular location is the extracellular matrix. A major component of the extracellular matrix of non-articular cartilage. Binds to type 2 collagens and forms long concatenated protein networks as part of the extracellular matrix. Required for the network-like organization and bundling of collagen fibrils surrounding chondrocytes in the zones of maturation and hypertrophy. Required for mechanotransduction and adaption to mechanical loading in cartilage chondrocytes, resulting in an increase in expression of the extracellular matrix components ACAN and COL2A1. Acts as a moderator of angiogenesis in response to injury. This is Matrilin-1 from Mus musculus (Mouse).